Here is a 479-residue protein sequence, read N- to C-terminus: Probable cytosol aminopeptidase (479 aa).

Mn(2+)-binding residues include Lys251 and Asp256. Lys263 is an active-site residue. Mn(2+) contacts are provided by Asp274, Asp333, and Glu335. Arg337 is a catalytic residue.

This sequence belongs to the peptidase M17 family. It depends on Mn(2+) as a cofactor.

The protein resides in the cytoplasm. The catalysed reaction is Release of an N-terminal amino acid, Xaa-|-Yaa-, in which Xaa is preferably Leu, but may be other amino acids including Pro although not Arg or Lys, and Yaa may be Pro. Amino acid amides and methyl esters are also readily hydrolyzed, but rates on arylamides are exceedingly low.. The enzyme catalyses Release of an N-terminal amino acid, preferentially leucine, but not glutamic or aspartic acids.. Presumably involved in the processing and regular turnover of intracellular proteins. Catalyzes the removal of unsubstituted N-terminal amino acids from various peptides. This chain is Probable cytosol aminopeptidase, found in Albidiferax ferrireducens (strain ATCC BAA-621 / DSM 15236 / T118) (Rhodoferax ferrireducens).